Reading from the N-terminus, the 203-residue chain is NADH-quinone oxidoreductase subunit C (203 aa).

This sequence belongs to the complex I 30 kDa subunit family. In terms of assembly, NDH-1 is composed of 14 different subunits. Subunits NuoB, C, D, E, F, and G constitute the peripheral sector of the complex.

It is found in the cell inner membrane. The catalysed reaction is a quinone + NADH + 5 H(+)(in) = a quinol + NAD(+) + 4 H(+)(out). Its function is as follows. NDH-1 shuttles electrons from NADH, via FMN and iron-sulfur (Fe-S) centers, to quinones in the respiratory chain. The immediate electron acceptor for the enzyme in this species is believed to be ubiquinone. Couples the redox reaction to proton translocation (for every two electrons transferred, four hydrogen ions are translocated across the cytoplasmic membrane), and thus conserves the redox energy in a proton gradient. In Bartonella tribocorum (strain CIP 105476 / IBS 506), this protein is NADH-quinone oxidoreductase subunit C.